Reading from the N-terminus, the 353-residue chain is Phosphoribosylformylglycinamidine cyclo-ligase (353 aa).

This sequence belongs to the AIR synthase family.

It is found in the cytoplasm. It carries out the reaction 2-formamido-N(1)-(5-O-phospho-beta-D-ribosyl)acetamidine + ATP = 5-amino-1-(5-phospho-beta-D-ribosyl)imidazole + ADP + phosphate + H(+). It functions in the pathway purine metabolism; IMP biosynthesis via de novo pathway; 5-amino-1-(5-phospho-D-ribosyl)imidazole from N(2)-formyl-N(1)-(5-phospho-D-ribosyl)glycinamide: step 2/2. This is Phosphoribosylformylglycinamidine cyclo-ligase from Pseudomonas aeruginosa (strain LESB58).